The sequence spans 415 residues: FXa-directed anticoagulant (415 aa).

An N-terminal signal peptide occupies residues 1–17 (MYLKIVILVTFPLVCFT). N-linked (GlcNAc...) asparagine glycans are attached at residues asparagine 117, asparagine 166, asparagine 216, and asparagine 320.

Belongs to the serpin family. As to quaternary structure, (Microbial infection) Interacts with Zika virus envelope protein E and Zika virus-like particles; the interaction does not affect Zika virus replication in human endothelial cells and keratinocytes. In terms of processing, the N-terminus is blocked. Female salivary gland (at protein level). Not detected in female carcass without head and salivary glands. Not detected in male tissues.

The protein localises to the secreted. In terms of biological role, anticoagulant serpin-type protein inhibiting host coagulation factor Xa (F10). Does not inhibit host thrombin (F2) and trypsin. Its function is as follows. (Microbial infection) Does not affect Zika virus replication in human endothelial cells and keratinocytes. This Aedes aegypti (Yellowfever mosquito) protein is FXa-directed anticoagulant.